We begin with the raw amino-acid sequence, 340 residues long: Aldo-keto reductase yakc [NADP(+)] (340 aa).

The Proton donor role is filled by Tyr-56. Substrate is bound at residue His-126. Position 208-218 (208-218 (APLGRGFLTGA)) interacts with NADP(+).

Belongs to the aldo/keto reductase family. Aldo/keto reductase 2 subfamily. Monomer.

The polypeptide is Aldo-keto reductase yakc [NADP(+)] (yakc) (Schizosaccharomyces pombe (strain 972 / ATCC 24843) (Fission yeast)).